A 162-amino-acid chain; its full sequence is 2-C-methyl-D-erythritol 2,4-cyclodiphosphate synthase (162 aa).

A divalent metal cation is bound by residues Asp8 and His10. Residues Asp8–His10 and His36–Ser37 each bind 4-CDP-2-C-methyl-D-erythritol 2-phosphate. His44 lines the a divalent metal cation pocket. Residues Asp58–Gly60, Phe63–Asp67, Ala102–Ala108, Thr134–Glu137, Phe141, and Arg144 each bind 4-CDP-2-C-methyl-D-erythritol 2-phosphate.

The protein belongs to the IspF family. Homotrimer. A divalent metal cation is required as a cofactor.

The catalysed reaction is 4-CDP-2-C-methyl-D-erythritol 2-phosphate = 2-C-methyl-D-erythritol 2,4-cyclic diphosphate + CMP. Its pathway is isoprenoid biosynthesis; isopentenyl diphosphate biosynthesis via DXP pathway; isopentenyl diphosphate from 1-deoxy-D-xylulose 5-phosphate: step 4/6. Its function is as follows. Involved in the biosynthesis of isopentenyl diphosphate (IPP) and dimethylallyl diphosphate (DMAPP), two major building blocks of isoprenoid compounds. Catalyzes the conversion of 4-diphosphocytidyl-2-C-methyl-D-erythritol 2-phosphate (CDP-ME2P) to 2-C-methyl-D-erythritol 2,4-cyclodiphosphate (ME-CPP) with a corresponding release of cytidine 5-monophosphate (CMP). This chain is 2-C-methyl-D-erythritol 2,4-cyclodiphosphate synthase, found in Yersinia pseudotuberculosis serotype O:1b (strain IP 31758).